We begin with the raw amino-acid sequence, 173 residues long: NADH-ubiquinone oxidoreductase chain 6 (173 aa).

5 helical membrane-spanning segments follow: residues M1–S21, Y27–G47, V48–V68, V87–F107, and Y139–L159.

This sequence belongs to the complex I subunit 6 family.

It localises to the mitochondrion membrane. The catalysed reaction is a ubiquinone + NADH + 5 H(+)(in) = a ubiquinol + NAD(+) + 4 H(+)(out). Core subunit of the mitochondrial membrane respiratory chain NADH dehydrogenase (Complex I) that is believed to belong to the minimal assembly required for catalysis. Complex I functions in the transfer of electrons from NADH to the respiratory chain. The immediate electron acceptor for the enzyme is believed to be ubiquinone. The protein is NADH-ubiquinone oxidoreductase chain 6 (MT-ND6) of Coturnix japonica (Japanese quail).